Consider the following 194-residue polypeptide: MKLSLFIIAVLMPVILLSACSDHAEEHASINTKKTVENITDVRKTAKTSIDWTKPSGGEYPDIKQKHVWIDVNVKEQKAYIKEGSNTIYTMMISSGLDQTKDDATPKGTFYVEPERGEWFFSEGYQEGAEYWVSWKNHGEFLFHSVPMTKDQKVIKTEAEKLGTKASHGCIRLTIPDAKWVYENIPEHTKVVIS.

An N-terminal signal peptide occupies residues 1 to 19 (MKLSLFIIAVLMPVILLSA). Cys-20 is lipidated: N-palmitoyl cysteine. A lipid anchor (S-diacylglycerol cysteine) is attached at Cys-20. The 127-residue stretch at 68 to 194 (VWIDVNVKEQ…IPEHTKVVIS (127 aa)) folds into the L,D-TPase catalytic domain. Catalysis depends on His-144, which acts as the Proton donor/acceptor. The Nucleophile role is filled by Cys-170.

The protein belongs to the YkuD family.

It localises to the cell membrane. The protein operates within cell wall biogenesis; peptidoglycan biosynthesis. This is Putative L,D-transpeptidase YciB (yciB) from Bacillus subtilis (strain 168).